A 389-amino-acid chain; its full sequence is F-box protein At3g19880 (389 aa).

The F-box domain maps to 2–49; the sequence is TMMSDLTQDLVEEILSRVPITSLGAVRSTCKGWNALSKERILCIGEPK.

The protein is F-box protein At3g19880 of Arabidopsis thaliana (Mouse-ear cress).